A 133-amino-acid chain; its full sequence is Ribonuclease P protein component (133 aa).

This sequence belongs to the RnpA family. As to quaternary structure, consists of a catalytic RNA component (M1 or rnpB) and a protein subunit.

The enzyme catalyses Endonucleolytic cleavage of RNA, removing 5'-extranucleotides from tRNA precursor.. In terms of biological role, RNaseP catalyzes the removal of the 5'-leader sequence from pre-tRNA to produce the mature 5'-terminus. It can also cleave other RNA substrates such as 4.5S RNA. The protein component plays an auxiliary but essential role in vivo by binding to the 5'-leader sequence and broadening the substrate specificity of the ribozyme. The sequence is that of Ribonuclease P protein component from Synechococcus sp. (strain JA-2-3B'a(2-13)) (Cyanobacteria bacterium Yellowstone B-Prime).